The primary structure comprises 478 residues: ATP synthase subunit beta (478 aa).

Position 155-162 (155-162) interacts with ATP; that stretch reads GGAGVGKT.

This sequence belongs to the ATPase alpha/beta chains family. In terms of assembly, F-type ATPases have 2 components, CF(1) - the catalytic core - and CF(0) - the membrane proton channel. CF(1) has five subunits: alpha(3), beta(3), gamma(1), delta(1), epsilon(1). CF(0) has three main subunits: a(1), b(2) and c(9-12). The alpha and beta chains form an alternating ring which encloses part of the gamma chain. CF(1) is attached to CF(0) by a central stalk formed by the gamma and epsilon chains, while a peripheral stalk is formed by the delta and b chains.

The protein resides in the cell inner membrane. It carries out the reaction ATP + H2O + 4 H(+)(in) = ADP + phosphate + 5 H(+)(out). Produces ATP from ADP in the presence of a proton gradient across the membrane. The catalytic sites are hosted primarily by the beta subunits. The polypeptide is ATP synthase subunit beta (Fuscovulum blasticum (Rhodobacter blasticus)).